We begin with the raw amino-acid sequence, 94 residues long: MLKPLGDRVIIELVESEEKTASGIVLPDSAKEKPQEGKIVAAGSGRVLESGERVALEVNTGDRIIFSKYAGTEVKYEGKEYLILRESDILAVIG.

It belongs to the GroES chaperonin family. Heptamer of 7 subunits arranged in a ring. Interacts with the chaperonin GroEL.

It localises to the cytoplasm. Functionally, together with the chaperonin GroEL, plays an essential role in assisting protein folding. The GroEL-GroES system forms a nano-cage that allows encapsulation of the non-native substrate proteins and provides a physical environment optimized to promote and accelerate protein folding. GroES binds to the apical surface of the GroEL ring, thereby capping the opening of the GroEL channel. This chain is Co-chaperonin GroES, found in Bacillus pumilus (strain SAFR-032).